A 753-amino-acid chain; its full sequence is 5-methyltetrahydropteroyltriglutamate--homocysteine methyltransferase (753 aa).

Residues 17–20 and K117 contribute to the 5-methyltetrahydropteroyltri-L-glutamate site; that span reads RELK. L-homocysteine is bound by residues 431–433 and E484; that span reads IGS. Residues 431-433 and E484 contribute to the L-methionine site; that span reads IGS. Residues 515–516 and W561 contribute to the 5-methyltetrahydropteroyltri-L-glutamate site; that span reads RC. L-homocysteine is bound at residue D599. D599 is a binding site for L-methionine. Residue E605 coordinates 5-methyltetrahydropteroyltri-L-glutamate. Zn(2+)-binding residues include H641, C643, and E665. H694 functions as the Proton donor in the catalytic mechanism. Residue C726 participates in Zn(2+) binding.

It belongs to the vitamin-B12 independent methionine synthase family. The cofactor is Zn(2+).

It catalyses the reaction 5-methyltetrahydropteroyltri-L-glutamate + L-homocysteine = tetrahydropteroyltri-L-glutamate + L-methionine. It functions in the pathway amino-acid biosynthesis; L-methionine biosynthesis via de novo pathway; L-methionine from L-homocysteine (MetE route): step 1/1. Catalyzes the transfer of a methyl group from 5-methyltetrahydrofolate to homocysteine resulting in methionine formation. This is 5-methyltetrahydropteroyltriglutamate--homocysteine methyltransferase from Escherichia coli O6:K15:H31 (strain 536 / UPEC).